A 104-amino-acid polypeptide reads, in one-letter code: Large ribosomal subunit protein uL23 (104 aa).

This sequence belongs to the universal ribosomal protein uL23 family. As to quaternary structure, part of the 50S ribosomal subunit. Contacts protein L29, and trigger factor when it is bound to the ribosome.

Its function is as follows. One of the early assembly proteins it binds 23S rRNA. One of the proteins that surrounds the polypeptide exit tunnel on the outside of the ribosome. Forms the main docking site for trigger factor binding to the ribosome. The sequence is that of Large ribosomal subunit protein uL23 from Rhodospirillum rubrum (strain ATCC 11170 / ATH 1.1.1 / DSM 467 / LMG 4362 / NCIMB 8255 / S1).